Here is a 214-residue protein sequence, read N- to C-terminus: Germin-like protein (214 aa).

Residues 1-22 (MVMMRIFFFLFLLAFPVFTANA) form the signal peptide. A disulfide bridge connects residues C28 and C44. The 147-residue stretch at 58-204 (SGLAKPGNTT…TTCLDEATIK (147 aa)) folds into the Cupin type-1 domain. The Mn(2+) site is built by H106, H108, and E113.

It belongs to the germin family. Oligomer (believed to be a pentamer but probably hexamer). In terms of tissue distribution, cotyledons and leaves.

The protein localises to the secreted. It localises to the extracellular space. Its subcellular location is the apoplast. The chain is Germin-like protein (GLP) from Ipomoea nil (Japanese morning glory).